The chain runs to 75 residues: Large ribosomal subunit protein bL31 (75 aa).

The protein belongs to the bacterial ribosomal protein bL31 family. Type A subfamily. In terms of assembly, part of the 50S ribosomal subunit.

Its function is as follows. Binds the 23S rRNA. The protein is Large ribosomal subunit protein bL31 of Bradyrhizobium diazoefficiens (strain JCM 10833 / BCRC 13528 / IAM 13628 / NBRC 14792 / USDA 110).